A 570-amino-acid polypeptide reads, in one-letter code: Urease subunit alpha (570 aa).

The 440-residue stretch at 131–570 folds into the Urease domain; sequence GGFDAHIHFI…LPMAQRYFLF (440 aa). Residues His-136, His-138, and Lys-219 each contribute to the Ni(2+) site. Lys-219 carries the N6-carboxylysine modification. Residue His-221 coordinates substrate. Positions 248 and 274 each coordinate Ni(2+). Residue His-322 is the Proton donor of the active site. Asp-362 contacts Ni(2+).

Belongs to the metallo-dependent hydrolases superfamily. Urease alpha subunit family. Heterotrimer of UreA (gamma), UreB (beta) and UreC (alpha) subunits. Three heterotrimers associate to form the active enzyme. Requires Ni cation as cofactor. Post-translationally, carboxylation allows a single lysine to coordinate two nickel ions.

It localises to the cytoplasm. The enzyme catalyses urea + 2 H2O + H(+) = hydrogencarbonate + 2 NH4(+). It functions in the pathway nitrogen metabolism; urea degradation; CO(2) and NH(3) from urea (urease route): step 1/1. The chain is Urease subunit alpha from Chelativorans sp. (strain BNC1).